A 492-amino-acid polypeptide reads, in one-letter code: GTPase Der (492 aa).

The EngA-type G 1 domain maps to 3–166 (PVIALVGRPN…AVLGIFPKDA (164 aa)). Residues 9 to 16 (GRPNVGKS), 56 to 60 (DTGGI), and 118 to 121 (NKVD) each bind GTP. A disordered region spans residues 166 to 190 (AGEPEEGAEAEEEVQEGQEAKRIPG). Residues 168-181 (EPEEGAEAEEEVQE) show a composition bias toward acidic residues. The region spanning 197–370 (IKLAIIGRPN…SVQAAFHSAV (174 aa)) is the EngA-type G 2 domain. GTP-binding positions include 203-210 (GRPNVGKS), 250-254 (DTAGV), and 315-318 (NKWD). Residues 371 to 455 (TRWPTSRLTQ…PIRIEYKGGE (85 aa)) form the KH-like domain. The interval 453 to 492 (GGENPYEGNKNKLTDRQVNKKRRLMSHHKKAEKKRKDKRK) is disordered. Residues 461-470 (NKNKLTDRQV) are compositionally biased toward basic and acidic residues. The segment covering 471 to 492 (NKKRRLMSHHKKAEKKRKDKRK) has biased composition (basic residues).

It belongs to the TRAFAC class TrmE-Era-EngA-EngB-Septin-like GTPase superfamily. EngA (Der) GTPase family. As to quaternary structure, associates with the 50S ribosomal subunit.

Its function is as follows. GTPase that plays an essential role in the late steps of ribosome biogenesis. In Ectopseudomonas mendocina (strain ymp) (Pseudomonas mendocina), this protein is GTPase Der.